The primary structure comprises 315 residues: Ribosomal protein L11 methyltransferase (315 aa).

The S-adenosyl-L-methionine site is built by T164, G185, D207, and N250.

This sequence belongs to the methyltransferase superfamily. PrmA family.

The protein resides in the cytoplasm. The enzyme catalyses L-lysyl-[protein] + 3 S-adenosyl-L-methionine = N(6),N(6),N(6)-trimethyl-L-lysyl-[protein] + 3 S-adenosyl-L-homocysteine + 3 H(+). Methylates ribosomal protein L11. The sequence is that of Ribosomal protein L11 methyltransferase from Exiguobacterium sibiricum (strain DSM 17290 / CCUG 55495 / CIP 109462 / JCM 13490 / 255-15).